Reading from the N-terminus, the 874-residue chain is Valine--tRNA ligase (874 aa).

Residues 1–10 show a composition bias toward polar residues; the sequence is MTENSQQQPP. The disordered stretch occupies residues 1-23; that stretch reads MTENSQQQPPASEPELPTQYAPA. Residues 57–67 carry the 'HIGH' region motif; sequence PNVTGSLHLGH. The 'KMSKS' region signature appears at 531–535; sequence KMSKS. Lysine 534 serves as a coordination point for ATP. Residues 806–871 adopt a coiled-coil conformation; that stretch reads IDIVAERKRL…ARIQAQLDRM (66 aa).

This sequence belongs to the class-I aminoacyl-tRNA synthetase family. ValS type 1 subfamily. As to quaternary structure, monomer.

It is found in the cytoplasm. It catalyses the reaction tRNA(Val) + L-valine + ATP = L-valyl-tRNA(Val) + AMP + diphosphate. Its function is as follows. Catalyzes the attachment of valine to tRNA(Val). As ValRS can inadvertently accommodate and process structurally similar amino acids such as threonine, to avoid such errors, it has a 'posttransfer' editing activity that hydrolyzes mischarged Thr-tRNA(Val) in a tRNA-dependent manner. This chain is Valine--tRNA ligase, found in Streptomyces avermitilis (strain ATCC 31267 / DSM 46492 / JCM 5070 / NBRC 14893 / NCIMB 12804 / NRRL 8165 / MA-4680).